We begin with the raw amino-acid sequence, 210 residues long: Regulator of G-protein signaling 17 (210 aa).

Positions 1–21 (MRKRQQSQNEGTQAVSQAPGN) are disordered. In terms of domain architecture, RGS spans 84–200 (NFDKMMKTPA…LNSQIYKAFV (117 aa)). Y137 is modified (phosphotyrosine).

As to quaternary structure, interacts with GNAI1 and GNAQ. Interacts with GNAZ and GNAI2. Interacts with OPRM1. Forms a complex with mu-opioid receptors and G(alpha)z/i2 subunits, including GNAZ and GNAI2; the formation of this complex results in mu-opioid receptor desensitization. Interacts with HINT1. In terms of processing, N- and O-glycosylated in synapsomal membranes. Serine phosphorylated in synapsomal membranes. Post-translationally, sumoylated with SUMO1 and SUM02 in synaptosomes. The sumoylated forms act as a scaffold for sequestering mu-opioid receptor-activated G(alpha) subunits. Desumoylated by HINT1. Detected in brain (at protein level). Highly expressed in the hypothalamus, periaqueductal gray matter, and pons-medulla. Lower levels in the thalamus, cortex and spinal cord. Weak expression in the striatum and cerebellum.

It localises to the membrane. It is found in the synapse. The protein resides in the synaptosome. The protein localises to the nucleus. Its subcellular location is the cytoplasm. Its function is as follows. Regulates G protein-coupled receptor signaling cascades, including signaling via muscarinic acetylcholine receptor CHRM2 and dopamine receptor DRD2. Inhibits signal transduction by increasing the GTPase activity of G protein alpha subunits, thereby driving them into their inactive GDP-bound form. Binds selectively to GNAZ and GNAI2 subunits, accelerates their GTPase activity and regulates their signaling activities. Negatively regulates mu-opioid receptor-mediated activation of the G-proteins. This chain is Regulator of G-protein signaling 17 (Rgs17), found in Mus musculus (Mouse).